The sequence spans 64 residues: UPF0434 protein BOV_A0835 (64 aa).

Belongs to the UPF0434 family.

This chain is UPF0434 protein BOV_A0835, found in Brucella ovis (strain ATCC 25840 / 63/290 / NCTC 10512).